Here is a 249-residue protein sequence, read N- to C-terminus: Expansin-A18 (249 aa).

An N-terminal signal peptide occupies residues 1–21 (MGNIVLQLLAILALCIAPARS). Residues 41-154 (GGACGYGNLY…QQVKCWRSGG (114 aa)) enclose the Expansin-like EG45 domain. N-linked (GlcNAc...) asparagine glycosylation is present at N116. Residues 164–243 (YFELVLVTNM…GWSFGQTFST (80 aa)) form the Expansin-like CBD domain.

This sequence belongs to the expansin family. Expansin A subfamily. In terms of tissue distribution, expressed in roots.

It is found in the secreted. It localises to the cell wall. The protein localises to the membrane. In terms of biological role, may cause loosening and extension of plant cell walls by disrupting non-covalent bonding between cellulose microfibrils and matrix glucans. No enzymatic activity has been found. May be required for rapid internodal elongation in deepwater rice during submergence. The chain is Expansin-A18 (EXPA18) from Oryza sativa subsp. japonica (Rice).